We begin with the raw amino-acid sequence, 138 residues long: Ribosome-binding factor A (138 aa).

The segment at 117–138 is disordered; it reads ERQNKPAASTEKPPVGSLDADL.

It belongs to the RbfA family. Monomer. Binds 30S ribosomal subunits, but not 50S ribosomal subunits or 70S ribosomes.

Its subcellular location is the cytoplasm. Its function is as follows. One of several proteins that assist in the late maturation steps of the functional core of the 30S ribosomal subunit. Associates with free 30S ribosomal subunits (but not with 30S subunits that are part of 70S ribosomes or polysomes). Required for efficient processing of 16S rRNA. May interact with the 5'-terminal helix region of 16S rRNA. The protein is Ribosome-binding factor A of Acaryochloris marina (strain MBIC 11017).